Reading from the N-terminus, the 473-residue chain is GDP-fucose protein O-fucosyltransferase 2 (473 aa).

A signal peptide spans 1–25 (MKNMIYNLISISLYSLIIILTDIYA). GDP-beta-L-fucose is bound by residues 59–63 (GEGFN), 283–285 (HLR), and 379–380 (RF). E60 serves as the catalytic Proton acceptor.

Belongs to the glycosyltransferase 68 family.

It is found in the endoplasmic reticulum. The catalysed reaction is L-seryl-[protein] + GDP-beta-L-fucose = 3-O-(alpha-L-fucosyl)-L-seryl-[protein] + GDP + H(+). It carries out the reaction L-threonyl-[protein] + GDP-beta-L-fucose = 3-O-(alpha-L-fucosyl)-L-threonyl-[protein] + GDP + H(+). The protein operates within protein modification; protein glycosylation. Catalyzes the reaction that attaches fucose through an O-glycosidic linkage to a conserved serine or threonine residue in the consensus sequence C1-X-X-S/T-C2 of thrombospondin type I repeats (TSRs) where C1 and C2 are the first and second cysteines of the repeat, respectively. O-fucosylates sporozoite proteins CSP and TRAP. O-fucosylation regulates stability and intracellular trafficking of TRAP but not of CSP. Dispensable for parasite transmission to the mosquito vector and/or infection of the vertebrate host hepatocytes. The chain is GDP-fucose protein O-fucosyltransferase 2 from Plasmodium berghei (strain Anka).